Consider the following 349-residue polypeptide: Ferredoxin--NADP reductase 1 (349 aa).

7 residues coordinate FAD: E36, K44, Y48, V88, L123, D290, and S331.

This sequence belongs to the ferredoxin--NADP reductase type 2 family. In terms of assembly, homodimer. It depends on FAD as a cofactor.

The enzyme catalyses 2 reduced [2Fe-2S]-[ferredoxin] + NADP(+) + H(+) = 2 oxidized [2Fe-2S]-[ferredoxin] + NADPH. The protein is Ferredoxin--NADP reductase 1 of Bacillus cereus (strain ATCC 10987 / NRS 248).